The sequence spans 353 residues: Photosystem II D2 protein (353 aa).

Thr-2 is subject to N-acetylthreonine. Phosphothreonine is present on Thr-2. The helical transmembrane segment at 41 to 61 (CAYFALGGWFTGTTFVTSWYT) threads the bilayer. Residue His-118 participates in chlorophyll a binding. Residues 125 to 141 (GFMLRQFELARSVQLRP) form a helical membrane-spanning segment. Pheophytin a-binding residues include Gln-130 and Asn-143. The chain crosses the membrane as a helical span at residues 153 to 166 (VFVSVFLIYPLGQS). His-198 lines the chlorophyll a pocket. Residues 208-228 (AALLCAIHGATVENTLFEDGD) traverse the membrane as a helical segment. A plastoquinone-binding residues include His-215 and Phe-262. His-215 contacts Fe cation. Residue His-269 coordinates Fe cation. A helical membrane pass occupies residues 279–295 (GLWMSAIGVVGLALNLR).

It belongs to the reaction center PufL/M/PsbA/D family. PSII is composed of 1 copy each of membrane proteins PsbA, PsbB, PsbC, PsbD, PsbE, PsbF, PsbH, PsbI, PsbJ, PsbK, PsbL, PsbM, PsbT, PsbX, PsbY, PsbZ, Psb30/Ycf12, at least 3 peripheral proteins of the oxygen-evolving complex and a large number of cofactors. It forms dimeric complexes. The cofactor is The D1/D2 heterodimer binds P680, chlorophylls that are the primary electron donor of PSII, and subsequent electron acceptors. It shares a non-heme iron and each subunit binds pheophytin, quinone, additional chlorophylls, carotenoids and lipids. There is also a Cl(-1) ion associated with D1 and D2, which is required for oxygen evolution. The PSII complex binds additional chlorophylls, carotenoids and specific lipids..

It is found in the plastid. Its subcellular location is the chloroplast thylakoid membrane. The catalysed reaction is 2 a plastoquinone + 4 hnu + 2 H2O = 2 a plastoquinol + O2. Its function is as follows. Photosystem II (PSII) is a light-driven water:plastoquinone oxidoreductase that uses light energy to abstract electrons from H(2)O, generating O(2) and a proton gradient subsequently used for ATP formation. It consists of a core antenna complex that captures photons, and an electron transfer chain that converts photonic excitation into a charge separation. The D1/D2 (PsbA/PsbD) reaction center heterodimer binds P680, the primary electron donor of PSII as well as several subsequent electron acceptors. D2 is needed for assembly of a stable PSII complex. This chain is Photosystem II D2 protein, found in Agrostis stolonifera (Creeping bentgrass).